The following is a 455-amino-acid chain: MELKNKKVLVIGLAVTGVPLVRVLKQQGAQIIVNDMKSEVDLAETIDAIGHEQIEYILGRHPEELTTLGELDLVVLSPGVPLDIPFIQQIKAQGIEIIGEVELAFRLSRGKIVAITGTNGKTTTTALTGEIFKGAGKNTYVVGNIGVPFIEKALDTTEEDVIVIEVSSFQLESIKEFHPKVGTLLNLTPDHLNRHKTIENYREAKLNLFMNQSLQDYAVLNYDDITSREAGKTLAAQKIYFSRKQILEEGVFVDNQLITIQTKEKRYDVIHIDEIKILGQHNLENALAATAMTFILGVSAEDIAKGLRNFPGVAHRLEFVEEIEGVKYINDSKGTNTDASIKAIEAAQAPIILLAGGQDKGGDFTDFVKAFDGKVKHLLVYGETSDNIYETALHNNFKVVSQVRDLEEAVIRAKGIAQAGDTILLSPACASWDMYPNFEARGQHFKKLVSSLRRS.

117–123 (GTNGKTT) is an ATP binding site.

The protein belongs to the MurCDEF family.

The protein localises to the cytoplasm. It carries out the reaction UDP-N-acetyl-alpha-D-muramoyl-L-alanine + D-glutamate + ATP = UDP-N-acetyl-alpha-D-muramoyl-L-alanyl-D-glutamate + ADP + phosphate + H(+). Its pathway is cell wall biogenesis; peptidoglycan biosynthesis. Cell wall formation. Catalyzes the addition of glutamate to the nucleotide precursor UDP-N-acetylmuramoyl-L-alanine (UMA). The polypeptide is UDP-N-acetylmuramoylalanine--D-glutamate ligase (Alkaliphilus metalliredigens (strain QYMF)).